A 179-amino-acid chain; its full sequence is Ribosome maturation factor RimM (179 aa).

The PRC barrel domain maps to 95–174 (KDEFFYFDIL…QIFCTQDAFL (80 aa)).

Belongs to the RimM family. As to quaternary structure, binds ribosomal protein uS19.

Its subcellular location is the cytoplasm. Its function is as follows. An accessory protein needed during the final step in the assembly of 30S ribosomal subunit, possibly for assembly of the head region. Essential for efficient processing of 16S rRNA. May be needed both before and after RbfA during the maturation of 16S rRNA. It has affinity for free ribosomal 30S subunits but not for 70S ribosomes. This is Ribosome maturation factor RimM from Campylobacter jejuni subsp. doylei (strain ATCC BAA-1458 / RM4099 / 269.97).